We begin with the raw amino-acid sequence, 443 residues long: MPFIVNTDQDREEMLRSIGASSFDDLIADIPPEIRLDRALELFPALSEQEVMTLLEGLSSANSSSAGFVSFLGGGAYDHFIPSAVKSIVSRSEFYTAYTPYQAEVSQGTLQAIYEYQSMMCRLYDMDVANASMYDGATALAEAVLMAMTITGRELVVLAGKLSPYTGSVLKTYLEASGHGVIHQNRLENGIGSVDGLKGLMNDRVAAVVVQQPNFYGSLEEVEAIGAAARENGALFIVSADPVSLGILAAPGSYGADIAVGEGQPLGNHQNFGGPYLGIFTVRQPYVRKIPGRLVGMTKDREGNDGFILTLQTREQHIRREKATSNICTNQALCALQAAVYLSLLGKQGIREVAEQCTLKAHYLAGRITELPGYSLKYSAPFFREFVLETPLPAAVIISAMLEKGIFAGYDLSASGENGLLVAVTEKRTRAELDSFVQALAAL.

It belongs to the GcvP family. N-terminal subunit subfamily. In terms of assembly, the glycine cleavage system is composed of four proteins: P, T, L and H. In this organism, the P 'protein' is a heterodimer of two subunits.

It carries out the reaction N(6)-[(R)-lipoyl]-L-lysyl-[glycine-cleavage complex H protein] + glycine + H(+) = N(6)-[(R)-S(8)-aminomethyldihydrolipoyl]-L-lysyl-[glycine-cleavage complex H protein] + CO2. Functionally, the glycine cleavage system catalyzes the degradation of glycine. The P protein binds the alpha-amino group of glycine through its pyridoxal phosphate cofactor; CO(2) is released and the remaining methylamine moiety is then transferred to the lipoamide cofactor of the H protein. This chain is Probable glycine dehydrogenase (decarboxylating) subunit 1, found in Chlorobium limicola (strain DSM 245 / NBRC 103803 / 6330).